The primary structure comprises 296 residues: Fructose-bisphosphate aldolase class 1 (296 aa).

The active-site Proton acceptor is E175. K212 (schiff-base intermediate with dihydroxyacetone-P) is an active-site residue.

Belongs to the class I fructose-bisphosphate aldolase family.

It carries out the reaction beta-D-fructose 1,6-bisphosphate = D-glyceraldehyde 3-phosphate + dihydroxyacetone phosphate. It functions in the pathway carbohydrate degradation; glycolysis; D-glyceraldehyde 3-phosphate and glycerone phosphate from D-glucose: step 4/4. The protein is Fructose-bisphosphate aldolase class 1 of Staphylococcus aureus (strain bovine RF122 / ET3-1).